The chain runs to 340 residues: Alcohol dehydrogenase (340 aa).

Zn(2+) contacts are provided by Cys-37, His-58, Cys-89, Cys-92, Cys-95, Cys-103, and Cys-145.

Belongs to the zinc-containing alcohol dehydrogenase family. It depends on Zn(2+) as a cofactor.

The enzyme catalyses a primary alcohol + NAD(+) = an aldehyde + NADH + H(+). It carries out the reaction a secondary alcohol + NAD(+) = a ketone + NADH + H(+). This Staphylococcus epidermidis (strain ATCC 35984 / DSM 28319 / BCRC 17069 / CCUG 31568 / BM 3577 / RP62A) protein is Alcohol dehydrogenase (adh).